We begin with the raw amino-acid sequence, 62 residues long: Large ribosomal subunit protein eL24 (62 aa).

4 residues coordinate Zn(2+): C7, C10, C33, and C37. Residues 7 to 37 (CSFCGKDILPGTGLMYVRNDGSLLWFCSSKC) form a C4-type zinc finger.

Belongs to the eukaryotic ribosomal protein eL24 family. As to quaternary structure, part of the 50S ribosomal subunit. Forms a cluster with proteins L3 and L14. Requires Zn(2+) as cofactor.

Functionally, binds to the 23S rRNA. The chain is Large ribosomal subunit protein eL24 from Sulfolobus acidocaldarius (strain ATCC 33909 / DSM 639 / JCM 8929 / NBRC 15157 / NCIMB 11770).